Here is a 330-residue protein sequence, read N- to C-terminus: Aspartate--ammonia ligase (330 aa).

The protein belongs to the class-II aminoacyl-tRNA synthetase family. AsnA subfamily.

It is found in the cytoplasm. It catalyses the reaction L-aspartate + NH4(+) + ATP = L-asparagine + AMP + diphosphate + H(+). It functions in the pathway amino-acid biosynthesis; L-asparagine biosynthesis; L-asparagine from L-aspartate (ammonia route): step 1/1. The sequence is that of Aspartate--ammonia ligase from Klebsiella pneumoniae (strain 342).